Consider the following 206-residue polypeptide: Holliday junction branch migration complex subunit RuvA (206 aa).

The segment at 1-63 (MIASLRGTVI…EDAMKLYGFI (63 aa)) is domain I. The domain II stretch occupies residues 64–142 (DNESREMFSV…AFAAGVVDEG (79 aa)). The tract at residues 143 to 153 (GEQISLPNANI) is flexible linker. The domain III stretch occupies residues 154–206 (ASEVVVEQVSQALVGLGFSEKQSDDAVSFVLAADPSLDTSGALRAALAKLSGK).

Belongs to the RuvA family. Homotetramer. Forms an RuvA(8)-RuvB(12)-Holliday junction (HJ) complex. HJ DNA is sandwiched between 2 RuvA tetramers; dsDNA enters through RuvA and exits via RuvB. An RuvB hexamer assembles on each DNA strand where it exits the tetramer. Each RuvB hexamer is contacted by two RuvA subunits (via domain III) on 2 adjacent RuvB subunits; this complex drives branch migration. In the full resolvosome a probable DNA-RuvA(4)-RuvB(12)-RuvC(2) complex forms which resolves the HJ.

The protein localises to the cytoplasm. In terms of biological role, the RuvA-RuvB-RuvC complex processes Holliday junction (HJ) DNA during genetic recombination and DNA repair, while the RuvA-RuvB complex plays an important role in the rescue of blocked DNA replication forks via replication fork reversal (RFR). RuvA specifically binds to HJ cruciform DNA, conferring on it an open structure. The RuvB hexamer acts as an ATP-dependent pump, pulling dsDNA into and through the RuvAB complex. HJ branch migration allows RuvC to scan DNA until it finds its consensus sequence, where it cleaves and resolves the cruciform DNA. The polypeptide is Holliday junction branch migration complex subunit RuvA (Corynebacterium glutamicum (strain ATCC 13032 / DSM 20300 / JCM 1318 / BCRC 11384 / CCUG 27702 / LMG 3730 / NBRC 12168 / NCIMB 10025 / NRRL B-2784 / 534)).